Here is a 383-residue protein sequence, read N- to C-terminus: Adaptive-response sensory kinase SasA (383 aa).

Residues 152 to 365 (MVAHELRTPL…CFTFTVPIWQ (214 aa)) enclose the Histidine kinase domain. At His-155 the chain carries Phosphohistidine; by autocatalysis.

In terms of assembly, homooligomerizes. Interacts with KaiC. Participates in the KaiABC clock complex, whose core is composed of a KaiC homohexamer, 6 KaiB and up to 6 KaiA dimers. SasA and KaiB(fs) compete to bind to KaiC.

It carries out the reaction ATP + protein L-histidine = ADP + protein N-phospho-L-histidine.. Member of the two-component regulatory system SasA/RpaA involved in genome-wide circadian gene expression. One of several clock output pathways. Participates in the Kai clock protein complex, the main circadian regulator in cyanobacteria, via its interaction with KaiC. KaiC enhances the autophosphorylation activity of SasA, which then transfers its phosphate group to RpaA to activate it. In addition to its output function, recruits fold-shifted KaiB (KaiB(fs)) to KaiC to cooperatively form the KaiB(6):KaiC(6) complex (independent of SasA kinase activity). Required for robustness of the circadian rhythm of gene expression and is involved in clock output, also required for adaptation to light/dark cycles. This chain is Adaptive-response sensory kinase SasA, found in Synechococcus sp. (strain CC9902).